A 570-amino-acid polypeptide reads, in one-letter code: Zinc finger and BTB domain-containing protein 44 (570 aa).

K4 is covalently cross-linked (Glycyl lysine isopeptide (Lys-Gly) (interchain with G-Cter in SUMO2)). The BTB domain maps to 31–98; the sequence is CDITIRVQDK…AYTATLSINT (68 aa). 6 positions are modified to phosphoserine: S135, S159, S161, S165, S191, and S194. Disordered stretches follow at residues 194-220 and 243-267; these read SPVK…NRNQ and EKVK…RRMA. The span at 199-220 shows a compositional bias: polar residues; that stretch reads GTQTSSPQVLNSSASYSENRNQ. Residue T200 is modified to Phosphothreonine. Residue K290 forms a Glycyl lysine isopeptide (Lys-Gly) (interchain with G-Cter in SUMO2) linkage. The interval 295–369 is disordered; that stretch reads SDEEVHEEVS…NAPPDDDDRL (75 aa). Positions 304–318 are enriched in low complexity; sequence SQPVSASQSSLSDQQ. Polar residues predominate over residues 352–361; it reads TLQSTSSTNA. 4 consecutive C2H2-type zinc fingers follow at residues 399 to 421, 427 to 449, 455 to 479, and 487 to 511; these read FQCP…MLIH, FQCD…RLKH, FRCQ…VSRH, and YECK…SLNH.

The protein localises to the nucleus. Functionally, may be involved in transcriptional regulation. In Homo sapiens (Human), this protein is Zinc finger and BTB domain-containing protein 44 (ZBTB44).